We begin with the raw amino-acid sequence, 469 residues long: Argininosuccinate lyase (469 aa).

This sequence belongs to the lyase 1 family. Argininosuccinate lyase subfamily.

It is found in the cytoplasm. The catalysed reaction is 2-(N(omega)-L-arginino)succinate = fumarate + L-arginine. The protein operates within amino-acid biosynthesis; L-arginine biosynthesis; L-arginine from L-ornithine and carbamoyl phosphate: step 3/3. The sequence is that of Argininosuccinate lyase from Burkholderia vietnamiensis (strain G4 / LMG 22486) (Burkholderia cepacia (strain R1808)).